The sequence spans 194 residues: Histone H1.0 (194 aa).

Met1 is subject to N-acetylmethionine. The disordered stretch occupies residues 1 to 26 (MTENSTSTPAAKPKRAKAAKKSTDHP). An N-acetylthreonine; in Histone H1.0, N-terminally processed modification is found at Thr2. In terms of domain architecture, H15 spans 24–97 (DHPKYSDMIV…GASGSFRLAK (74 aa)). Arg42 carries the citrulline modification. Residues 86 to 194 (GVGASGSFRL…SSAKRASKKK (109 aa)) are disordered. ADP-ribosylserine is present on Ser104. Positions 105 to 194 (VAFKKTKKEV…SSAKRASKKK (90 aa)) are enriched in basic residues.

The protein belongs to the histone H1/H5 family. In terms of processing, ADP-ribosylated on Ser-104 in response to DNA damage.

It localises to the nucleus. The protein resides in the chromosome. Histones H1 are necessary for the condensation of nucleosome chains into higher-order structures. The histones H1.0 are found in cells that are in terminal stages of differentiation or that have low rates of cell division. This chain is Histone H1.0 (H1-0), found in Rattus norvegicus (Rat).